The sequence spans 317 residues: uncharacterized protein (317 aa).

The Cytoplasmic segment spans residues 1–13 (MKRVTGVFLTLLR). A helical membrane pass occupies residues 14 to 34 (FSQFASSVLVMSLLAYAIHAY). Residues 35–49 (GNRGNKKTNFTLATG) lie on the Extracellular side of the membrane. N-linked (GlcNAc...) asparagine glycosylation is present at asparagine 43. A helical membrane pass occupies residues 50 to 70 (VISVFYLIALGILCLALPTLI). Residue tyrosine 71 is a topological domain, cytoplasmic. Residues 72-92 (IGMYFCAELIVCMLWLAAFVV) form a helical membrane-spanning segment. Residues 93-133 (LAKAQGERSCSNTNADGLYYNPYSGQYTADSHRRACNSSQA) lie on the Extracellular side of the membrane. Asparagine 129 is a glycosylation site (N-linked (GlcNAc...) asparagine). The chain crosses the membrane as a helical span at residues 134–154 (AIAFSGLCFVLFLISVILLGI). Residues 155 to 317 (NVLTPIRKRY…EPNRNVNQMP (163 aa)) lie on the Cytoplasmic side of the membrane. Residues 204-317 (RTGDVEAGAG…EPNRNVNQMP (114 aa)) form a disordered region. A compositionally biased stretch (low complexity) spans 239–250 (TTTTNTRYTTTT). Residues 256-282 (RYTTNDRNPGSANVANSAVDQHAYSTD) are compositionally biased toward polar residues. A compositionally biased stretch (basic and acidic residues) spans 284–295 (SGDRSYQEKVTE). The span at 302–317 (MSGSTAEPNRNVNQMP) shows a compositional bias: polar residues.

It localises to the membrane. This is an uncharacterized protein from Saccharomyces cerevisiae (strain ATCC 204508 / S288c) (Baker's yeast).